Here is a 113-residue protein sequence, read N- to C-terminus: Protein USP1 (113 aa).

An N-terminal signal peptide occupies residues 1–18; it reads MKITMLFAALSAASGAFA. Repeat copies occupy residues 32 to 37, 40 to 45, 46 to 49, 50 to 53, 59 to 65, and 69 to 75. The segment at 32–45 is 2 X 6 AA repeats; that stretch reads IGAGVGIGIGAGVG. Residues 46-53 form a 2 X 4 AA approximate tandem repeats region; sequence PYGYPYGA. Residues 59-75 form a 2 X 7 AA approximate repeats region; that stretch reads LQLLPLRWLSLQWIPLR.

The protein localises to the secreted. This Puccinia graminis (Black stem rust fungus) protein is Protein USP1 (USP1).